The primary structure comprises 255 residues: 4-hydroxy-tetrahydrodipicolinate reductase (255 aa).

NAD(+) is bound by residues 9–14 (GFKGRM), 89–91 (GTT), and 115–118 (APNF). Catalysis depends on His145, which acts as the Proton donor/acceptor. His146 serves as a coordination point for (S)-2,3,4,5-tetrahydrodipicolinate. Catalysis depends on Lys149, which acts as the Proton donor. 155–156 (GT) is a binding site for (S)-2,3,4,5-tetrahydrodipicolinate.

This sequence belongs to the DapB family.

It is found in the cytoplasm. It carries out the reaction (S)-2,3,4,5-tetrahydrodipicolinate + NAD(+) + H2O = (2S,4S)-4-hydroxy-2,3,4,5-tetrahydrodipicolinate + NADH + H(+). The catalysed reaction is (S)-2,3,4,5-tetrahydrodipicolinate + NADP(+) + H2O = (2S,4S)-4-hydroxy-2,3,4,5-tetrahydrodipicolinate + NADPH + H(+). It participates in amino-acid biosynthesis; L-lysine biosynthesis via DAP pathway; (S)-tetrahydrodipicolinate from L-aspartate: step 4/4. In terms of biological role, catalyzes the conversion of 4-hydroxy-tetrahydrodipicolinate (HTPA) to tetrahydrodipicolinate. The polypeptide is 4-hydroxy-tetrahydrodipicolinate reductase (Streptococcus mutans serotype c (strain ATCC 700610 / UA159)).